The chain runs to 309 residues: Homoserine O-acetyltransferase (309 aa).

The active-site Acyl-thioester intermediate is the Cys148. Residues Lys169 and Ser198 each coordinate substrate. Residue His241 is the Proton acceptor of the active site. Residue Glu243 is part of the active site. Arg255 lines the substrate pocket.

Belongs to the MetA family.

The protein localises to the cytoplasm. The catalysed reaction is L-homoserine + acetyl-CoA = O-acetyl-L-homoserine + CoA. Its pathway is amino-acid biosynthesis; L-methionine biosynthesis via de novo pathway; O-acetyl-L-homoserine from L-homoserine: step 1/1. Its function is as follows. Transfers an acetyl group from acetyl-CoA to L-homoserine, forming acetyl-L-homoserine. In vitro, can also use propionyl-CoA as acyl donor. The chain is Homoserine O-acetyltransferase from Shouchella clausii (Alkalihalobacillus clausii).